Consider the following 602-residue polypeptide: Elongation factor 4 (602 aa).

One can recognise a tr-type G domain in the interval 7–189 (KYIRNFSIVA…AIVNKVPAPE (183 aa)). GTP contacts are provided by residues 19–24 (DHGKST) and 136–139 (NKID).

It belongs to the TRAFAC class translation factor GTPase superfamily. Classic translation factor GTPase family. LepA subfamily.

Its subcellular location is the cell membrane. It carries out the reaction GTP + H2O = GDP + phosphate + H(+). Required for accurate and efficient protein synthesis under certain stress conditions. May act as a fidelity factor of the translation reaction, by catalyzing a one-codon backward translocation of tRNAs on improperly translocated ribosomes. Back-translocation proceeds from a post-translocation (POST) complex to a pre-translocation (PRE) complex, thus giving elongation factor G a second chance to translocate the tRNAs correctly. Binds to ribosomes in a GTP-dependent manner. The chain is Elongation factor 4 from Clostridium botulinum (strain Okra / Type B1).